Consider the following 244-residue polypeptide: Troponin I, cardiac muscle (244 aa).

Acidic residues predominate over residues 1–25 (MSDEEEVTYEEEEEEYVEEEEEEVV). A disordered region spans residues 1-67 (MSDEEEVTYE…PQVKRKPKIS (67 aa)). Ser-2 is modified (N-acetylserine). The residue at position 2 (Ser-2) is a Phosphoserine; by CK2. Pro residues predominate over residues 27–42 (PEPPKPAPPPAAPPPL).

This sequence belongs to the troponin I family. In terms of assembly, binds to actin and tropomyosin. Heart.

Its function is as follows. Troponin I is the inhibitory subunit of troponin, the thin filament regulatory complex which confers calcium-sensitivity to striated muscle actomyosin ATPase activity. The polypeptide is Troponin I, cardiac muscle (tnni3) (Xenopus laevis (African clawed frog)).